The following is a 404-amino-acid chain: Cysteine desulfurase IscS (404 aa).

Residues 75–76, Asn155, Gln183, and 203–205 contribute to the pyridoxal 5'-phosphate site; these read AT and SGH. Position 206 is an N6-(pyridoxal phosphate)lysine (Lys206). Pyridoxal 5'-phosphate is bound at residue Thr243. Cys328 (cysteine persulfide intermediate) is an active-site residue. [2Fe-2S] cluster is bound at residue Cys328.

Belongs to the class-V pyridoxal-phosphate-dependent aminotransferase family. NifS/IscS subfamily. In terms of assembly, homodimer. Forms a heterotetramer with IscU, interacts with other sulfur acceptors. Pyridoxal 5'-phosphate is required as a cofactor.

The protein resides in the cytoplasm. It carries out the reaction (sulfur carrier)-H + L-cysteine = (sulfur carrier)-SH + L-alanine. Its pathway is cofactor biosynthesis; iron-sulfur cluster biosynthesis. Master enzyme that delivers sulfur to a number of partners involved in Fe-S cluster assembly, tRNA modification or cofactor biosynthesis. Catalyzes the removal of elemental sulfur atoms from cysteine to produce alanine. Functions as a sulfur delivery protein for Fe-S cluster synthesis onto IscU, an Fe-S scaffold assembly protein, as well as other S acceptor proteins. The sequence is that of Cysteine desulfurase IscS from Shewanella baltica (strain OS223).